Here is a 282-residue protein sequence, read N- to C-terminus: uncharacterized protein (282 aa).

An N-terminal signal peptide occupies residues 1-18 (MIDLLVILVSLLFGVVWY).

It belongs to the IIV-6 213R family.

This is an uncharacterized protein from Aedes vexans (Inland floodwater mosquito).